A 458-amino-acid chain; its full sequence is ATP synthase subunit beta (458 aa).

148–155 (GGAGVGKT) is a binding site for ATP.

Belongs to the ATPase alpha/beta chains family. In terms of assembly, F-type ATPases have 2 components, CF(1) - the catalytic core - and CF(0) - the membrane proton channel. CF(1) has five subunits: alpha(3), beta(3), gamma(1), delta(1), epsilon(1). CF(0) has three main subunits: a(1), b(2) and c(9-12). The alpha and beta chains form an alternating ring which encloses part of the gamma chain. CF(1) is attached to CF(0) by a central stalk formed by the gamma and epsilon chains, while a peripheral stalk is formed by the delta and b chains.

The protein localises to the cell inner membrane. It carries out the reaction ATP + H2O + 4 H(+)(in) = ADP + phosphate + 5 H(+)(out). In terms of biological role, produces ATP from ADP in the presence of a proton gradient across the membrane. The catalytic sites are hosted primarily by the beta subunits. The protein is ATP synthase subunit beta of Laribacter hongkongensis (strain HLHK9).